Here is a 101-residue protein sequence, read N- to C-terminus: MILEHVLVLSAYLFFIGLYGLITSRNMVRALMCLELILNAVNMNFVTFSDFFDNSQLKGDIFCIFVIAIAAAEAAIGLAIVSSIYRNRKSTRINQSTLLNK.

3 helical membrane passes run 2–22 (ILEHVLVLSAYLFFIGLYGLI), 32–52 (MCLELILNAVNMNFVTFSDFF), and 61–81 (IFCIFVIAIAAAEAAIGLAIV).

This sequence belongs to the complex I subunit 4L family. In terms of assembly, NDH is composed of at least 16 different subunits, 5 of which are encoded in the nucleus.

The protein resides in the plastid. The protein localises to the chloroplast thylakoid membrane. It catalyses the reaction a plastoquinone + NADH + (n+1) H(+)(in) = a plastoquinol + NAD(+) + n H(+)(out). The catalysed reaction is a plastoquinone + NADPH + (n+1) H(+)(in) = a plastoquinol + NADP(+) + n H(+)(out). Its function is as follows. NDH shuttles electrons from NAD(P)H:plastoquinone, via FMN and iron-sulfur (Fe-S) centers, to quinones in the photosynthetic chain and possibly in a chloroplast respiratory chain. The immediate electron acceptor for the enzyme in this species is believed to be plastoquinone. Couples the redox reaction to proton translocation, and thus conserves the redox energy in a proton gradient. In Aethionema cordifolium (Lebanon stonecress), this protein is NAD(P)H-quinone oxidoreductase subunit 4L, chloroplastic.